The chain runs to 725 residues: N-alpha-acetyltransferase 35, NatC auxiliary subunit (725 aa).

Position 187 is a phosphoserine (Ser187). Residues 548–573 (ERIMEEQQKGRSSKKTKKKKKVRPLS) are disordered. Over residues 558-571 (RSSKKTKKKKKVRP) the composition is skewed to basic residues.

The protein belongs to the MAK10 family. Component of the N-terminal acetyltransferase C (NatC) complex, which is composed of NAA35, NAA38 and NAA30.

The protein localises to the cytoplasm. In terms of biological role, auxillary component of the N-terminal acetyltransferase C (NatC) complex which catalyzes acetylation of N-terminal methionine residues. N-terminal acetylation protects proteins from ubiquitination and degradation by the N-end rule pathway. Involved in regulation of apoptosis and proliferation of smooth muscle cells. This is N-alpha-acetyltransferase 35, NatC auxiliary subunit (NAA35) from Macaca fascicularis (Crab-eating macaque).